The sequence spans 504 residues: Lysine--tRNA ligase (504 aa).

Positions 411 and 418 each coordinate Mg(2+).

Belongs to the class-II aminoacyl-tRNA synthetase family. In terms of assembly, homodimer. Mg(2+) is required as a cofactor.

The protein localises to the cytoplasm. The catalysed reaction is tRNA(Lys) + L-lysine + ATP = L-lysyl-tRNA(Lys) + AMP + diphosphate. This chain is Lysine--tRNA ligase, found in Clostridium botulinum (strain Okra / Type B1).